The primary structure comprises 153 residues: Endoribonuclease YbeY (153 aa).

Zn(2+) is bound by residues histidine 116, histidine 120, and histidine 126.

This sequence belongs to the endoribonuclease YbeY family. Requires Zn(2+) as cofactor.

It is found in the cytoplasm. Functionally, single strand-specific metallo-endoribonuclease involved in late-stage 70S ribosome quality control and in maturation of the 3' terminus of the 16S rRNA. The polypeptide is Endoribonuclease YbeY (Clavibacter sepedonicus (Clavibacter michiganensis subsp. sepedonicus)).